Here is a 141-residue protein sequence, read N- to C-terminus: HTH-type transcriptional repressor NsrR (141 aa).

Residues 2–129 enclose the HTH rrf2-type domain; sequence QLTSFTDYGL…DNYTLADLVE (128 aa). The segment at residues 28-51 is a DNA-binding region (H-T-H motif); it reads ISEVTDVYGVSRNHMVKIINQLSR. Cys-91, Cys-96, and Cys-102 together coordinate [2Fe-2S] cluster.

The cofactor is [2Fe-2S] cluster.

Nitric oxide-sensitive repressor of genes involved in protecting the cell against nitrosative stress. May require iron for activity. This is HTH-type transcriptional repressor NsrR from Escherichia coli O139:H28 (strain E24377A / ETEC).